Reading from the N-terminus, the 339-residue chain is DNA-directed RNA polymerase RPB7 homolog (339 aa).

The protein belongs to the Asfivirus DNA-directed RNA polymerase RPB7 homolog family. Part of the viral DNA-directed RNA polymerase that consists of 8 polII-like subunits (RPB1, RPB2, RPB3, RPB5, RPB6, RPB7, RPB9, RPB10), a capping enzyme and a termination factor.

The protein localises to the host cytoplasm. It localises to the virion. In terms of biological role, component of the DNA-directed RNA polymerase (RNAP) that catalyzes the transcription in the cytoplasm of viral DNA into RNA using the four ribonucleoside triphosphates as substrates. The sequence is that of DNA-directed RNA polymerase RPB7 homolog from African swine fever virus (strain Badajoz 1971 Vero-adapted) (Ba71V).